Reading from the N-terminus, the 923-residue chain is Neuropilin-1a (923 aa).

The N-terminal stretch at 1–19 (MHCGLVLILFTGIFLIVSA) is a signal peptide. At 20–856 (LKNDKCGDNI…AGNMLKTLDP (837 aa)) the chain is on the extracellular side. 3 disulfide bridges follow: Cys-25-Cys-52, Cys-80-Cys-102, and Cys-145-Cys-171. 2 CUB domains span residues 25 to 139 (CGDN…YEIF) and 145 to 263 (CSRN…FTVL). Asn-148 carries N-linked (GlcNAc...) asparagine glycosylation. 3 residues coordinate Ca(2+): Glu-193, Asp-207, and Asp-248. A disulfide bond links Cys-204 and Cys-226. Asn-259 is a glycosylation site (N-linked (GlcNAc...) asparagine). Disulfide bonds link Cys-273–Cys-422 and Cys-429–Cys-581. F5/8 type C domains are found at residues 273-422 (CTEP…VYGC) and 429-581 (CSGM…LLGC). Asn-520 carries N-linked (GlcNAc...) asparagine glycosylation. A disordered region spans residues 587 to 624 (TVPPTTPAASTTPSDECDDDQANCHSGTGDGYDQTGGT). Ser-612 carries an O-linked (Xyl...) (chondroitin sulfate) serine; alternate glycan. O-linked (Xyl...) (heparan sulfate) serine; alternate glycosylation is present at Ser-612. Residues 642–811 (FACDFGWAND…DNVNMADCKD (170 aa)) form the MAM domain. A helical membrane pass occupies residues 857–877 (ILITIIAMSALGVFLGAICGV). At 878–923 (VLYCACSHSGMSDRNLSALENYNFELVDGVKLKKDKLNSQNSYSEA) the chain is on the cytoplasmic side.

Belongs to the neuropilin family.

The protein localises to the membrane. Functionally, receptor involved in the development of the cardiovascular system, in angiogenesis, in the formation of certain neuronal circuits and in organogenesis outside the nervous system. It mediates the chemorepulsant activity of semaphorins. Regulates angiogenesis through a VEGF-dependent pathway. The chain is Neuropilin-1a (nrp1a) from Danio rerio (Zebrafish).